The sequence spans 189 residues: UPF0316 protein Sca_1484 (189 aa).

Transmembrane regions (helical) follow at residues 8-28 (PWLM…CLTV), 40-60 (VAAA…GLVM), and 66-86 (FQNI…GMKI).

Belongs to the UPF0316 family.

It is found in the cell membrane. This is UPF0316 protein Sca_1484 from Staphylococcus carnosus (strain TM300).